The following is a 1035-amino-acid chain: Kinesin-like protein KIN-4A (1035 aa).

One can recognise a Kinesin motor domain in the interval 11–370 (SVKVAVHIRP…LKYANRARNI (360 aa)). 90-97 (GQTGSGKT) contributes to the ATP binding site. 3 coiled-coil regions span residues 408–436 (CAEVQALKERIVWLETANEELCRELHEYR), 504–707 (QNSM…RKSS), and 881–911 (KEIVGLLRQSELRRKEAEKELKLREQAIATS). The disordered stretch occupies residues 704 to 724 (RKSSPREHSAGTNGFGTNGQT).

The protein belongs to the TRAFAC class myosin-kinesin ATPase superfamily. Kinesin family. KIN-4 subfamily. As to quaternary structure, homodimer. As to expression, expressed in stems and flowers. Detected in cells undergoing secondary wall deposition including developing interfascicular fibers and xylem cells, but also in dividing cells and expanding/elongating parenchyma cells.

It localises to the cytoplasm. It is found in the cytoskeleton. Functionally, kinesin-like motor protein involved in the control of the oriented deposition of cellulose microfibrils. Its motor activity is directed toward the microtubule's plus end. It possesses the potential to drive long-distance transport of cargo along cortical microtubules. Regulates cell wall mechanics during cell elongation, by the regulation of primary and secondary walls deposition. Contributes to cortical microtubule-mediated trafficking of cell wall components. In Arabidopsis thaliana (Mouse-ear cress), this protein is Kinesin-like protein KIN-4A.